A 1461-amino-acid polypeptide reads, in one-letter code: MAAERGARRLLSTPSFWLYCLLLLGRRAPGAAAARSGSAPQSPGASIRTFTPFYFLVEPVDTLSVRGSSVILNCSAYSEPSPKIEWKKDGTFLNLVSDDRRQLLPDGSLFISNVVHSKHNKPDEGYYQCVATVESLGTIISRTAKLIVAGLPRFTSQPEPSSVYAGNNAILNCEVNADLVPFVRWEQNRQPLLLDDRVIKLPSGMLVISNATEGDGGLYRCVVESGGPPKYSDEVELKVLPDPEVISDLVFLKQPSPLVRVIGQDVVLPCVASGLPTPTIKWMKNEEALDTESSERLVLLAGGSLEISDVTEDDAGTYFCIADNGNETIEAQAELTVQAQPEFLKQPTNIYAHESMDIVFECEVTGKPTPTVKWVKNGDMVIPSDYFKIVKEHNLQVLGLVKSDEGFYQCIAENDVGNAQAGAQLIILEHAPATTGPLPSAPRDVVASLVSTRFIKLTWRTPASDPHGDNLTYSVFYTKEGIARERVENTSHPGEMQVTIQNLMPATVYIFRVMAQNKHGSGESSAPLRVETQPEVQLPGPAPNLRAYAASPTSITVTWETPVSGNGEIQNYKLYYMEKGTDKEQDVDVSSHSYTINGLKKYTEYSFRVVAYNKHGPGVSTPDVAVRTLSDVPSAAPQNLSLEVRNSKSIMIHWQPPAPATQNGQITGYKIRYRKASRKSDVTETLVSGTQLSQLIEGLDRGTEYNFRVAALTINGTGPATDWLSAETFESDLDETRVPEVPSSLHVRPLVTSIVVSWTPPENQNIVVRGYAIGYGIGSPHAQTIKVDYKQRYYTIENLDPSSHYVITLKAFNNVGEGIPLYESAVTRPHTDTSEVDLFVINAPYTPVPDPTPMMPPVGVQASILSHDTIRITWADNSLPKHQKITDSRYYTVRWKTNIPANTKYKNANATTLSYLVTGLKPNTLYEFSVMVTKGRRSSTWSMTAHGTTFELVPTSPPKDVTVVSKEGKPKTIIVNWQPPSEANGKITGYIIYYSTDVNAEIHDWVIEPVVGNRLTHQIQELTLDTPYYFKIQARNSKGMGPMSEAVQFRTPKADSSDKMPNDQASGSGGKGSRLPDLGSDYKPPMSGSNSPHGSPTSPLDSNMLLVIIVSVGVITIVVVVIIAVFCTRRTTSHQKKKRAACKSVNGSHKYKGNSKDVKPPDLWIHHERLELKPIDKSPDPNPIMTDTPIPRNSQDITPVDNSMDSNIHQRRNSYRGHESEDSMSTLAGRRGMRPKMMMPFDSQPPQPVISAHPIHSLDNPHHHFHSSSLASPARSHLYHPGSPWPIGTSMSLSDRANSTESVRNTPSTDTMPASSSQTCCTDHQDPEGATSSSYLASSQEEDSGQSLPTAHVRPSHPLKSFAVPAIPPPGPPTYDPALPSTPLLSQQALNHHIHSVKTASIGTLGRSRPPMPVVVPSAPEVQETTRMLEDSESSYEPDELTKEMAHLEGLMKDLNAITTA.

Positions 1–33 are cleaved as a signal peptide; that stretch reads MAAERGARRLLSTPSFWLYCLLLLGRRAPGAAA. Topologically, residues 34–1105 are extracellular; sequence ARSGSAPQSP…PTSPLDSNML (1072 aa). 4 consecutive Ig-like C2-type domains span residues 52–141, 152–238, 243–336, and 341–426; these read PFYF…TIIS, PRFT…VELK, PEVI…AELT, and PEFL…AQLI. Residue Asn73 is glycosylated (N-linked (GlcNAc...) asparagine). 3 disulfides stabilise this stretch: Cys74-Cys129, Cys173-Cys221, and Cys270-Cys320. Asn210 is a glycosylation site (N-linked (GlcNAc...) asparagine). Asn326 carries an N-linked (GlcNAc...) asparagine glycan. Cys362 and Cys410 are disulfide-bonded. 6 Fibronectin type-III domains span residues 441-535, 541-631, 636-731, 741-831, 856-952, and 957-1054; these read APRD…TQPE, PAPN…TLSD, APQN…TFES, VPSS…RPHT, PPVG…TFEL, and PPKD…TPKA. Asn470 and Asn489 each carry an N-linked (GlcNAc...) asparagine glycan. N-linked (GlcNAc...) asparagine glycosylation is found at Asn639 and Asn715. The N-linked (GlcNAc...) asparagine glycan is linked to Asn909. Residues 1041–1097 form a disordered region; it reads GPMSEAVQFRTPKADSSDKMPNDQASGSGGKGSRLPDLGSDYKPPMSGSNSPHGSPT. The span at 1052-1061 shows a compositional bias: basic and acidic residues; sequence PKADSSDKMP. Polar residues predominate over residues 1087 to 1097; that stretch reads SGSNSPHGSPT. A helical membrane pass occupies residues 1106–1126; it reads LVIIVSVGVITIVVVVIIAVF. Topologically, residues 1127 to 1461 are cytoplasmic; the sequence is CTRRTTSHQK…MKDLNAITTA (335 aa). 4 disordered regions span residues 1138–1160, 1174–1206, 1235–1276, and 1289–1381; these read KRAA…DVKP, PIDK…SMDS, PKMM…PARS, and TSMS…ALPS. A phosphoserine mark is found at Ser1178 and Ser1194. Polar residues predominate over residues 1191 to 1206; that stretch reads PRNSQDITPVDNSMDS. Thr1198 carries the post-translational modification Phosphothreonine. Polar residues-rich tracts occupy residues 1289–1322 and 1330–1349; these read TSMS…TCCT and ATSS…QSLP. Residues 1366–1375 show a composition bias toward pro residues; that stretch reads AIPPPGPPTY. At Ser1401 the chain carries Phosphoserine. Thr1404 is subject to Phosphothreonine. Ser1432, Ser1434, and Ser1435 each carry phosphoserine.

This sequence belongs to the immunoglobulin superfamily. DCC family. Interacts with MYO10. Interacts with RGMA and RGMB. Interacts with BMP2, BMP4, BMP6, and BMP7. Widely expressed and also in cancer cell lines.

The protein localises to the cell membrane. Functionally, multi-functional cell surface receptor regulating cell adhesion in many diverse developmental processes, including neural tube and mammary gland formation, myogenesis and angiogenesis. Receptor for members of the BMP, netrin, and repulsive guidance molecule (RGM) families. Netrin-Neogenin interactions result in a chemoattractive axon guidance response and cell-cell adhesion, the interaction between NEO1/Neogenin and RGMa and RGMb induces a chemorepulsive response. In Homo sapiens (Human), this protein is Neogenin (NEO1).